The chain runs to 261 residues: Ribosomal RNA small subunit methyltransferase J (261 aa).

S-adenosyl-L-methionine-binding positions include 109–110, 125–126, and Asp179; these read RD and ER.

It belongs to the methyltransferase superfamily. RsmJ family.

The protein localises to the cytoplasm. It catalyses the reaction guanosine(1516) in 16S rRNA + S-adenosyl-L-methionine = N(2)-methylguanosine(1516) in 16S rRNA + S-adenosyl-L-homocysteine + H(+). Functionally, specifically methylates the guanosine in position 1516 of 16S rRNA. This is Ribosomal RNA small subunit methyltransferase J from Pseudomonas paraeruginosa (strain DSM 24068 / PA7) (Pseudomonas aeruginosa (strain PA7)).